A 732-amino-acid polypeptide reads, in one-letter code: Eukaryotic translation initiation factor 3 subunit B (732 aa).

Positions 1–94 are sufficient for interaction with HCR1 and TIF32; it reads MTTLESLKIE…LFIEMESVSA (94 aa). Positions 1 to 219 are sufficient for interaction with PIC8; it reads MTTLESLKIE…GVTSWGGPNF (219 aa). The RRM domain occupies 37-120; it reads NFLVVDGAPV…HRLLVNSLND (84 aa). 4 WD repeats span residues 185-224, 237-280, 439-481, and 507-554; these read ARKN…RLKR, PTEK…LMKT, EMKD…KFFA, and VDQQ…KTLN.

It belongs to the eIF-3 subunit B family. As to quaternary structure, component of the eukaryotic translation initiation factor 3 (eIF-3) complex.

It is found in the cytoplasm. Its function is as follows. RNA-binding component of the eukaryotic translation initiation factor 3 (eIF-3) complex, which is involved in protein synthesis of a specialized repertoire of mRNAs and, together with other initiation factors, stimulates binding of mRNA and methionyl-tRNAi to the 40S ribosome. The eIF-3 complex specifically targets and initiates translation of a subset of mRNAs involved in cell proliferation. The protein is Eukaryotic translation initiation factor 3 subunit B of Kluyveromyces lactis (strain ATCC 8585 / CBS 2359 / DSM 70799 / NBRC 1267 / NRRL Y-1140 / WM37) (Yeast).